The primary structure comprises 491 residues: Aspartyl/glutamyl-tRNA(Asn/Gln) amidotransferase subunit B (491 aa).

It belongs to the GatB/GatE family. GatB subfamily. As to quaternary structure, heterotrimer of A, B and C subunits.

The enzyme catalyses L-glutamyl-tRNA(Gln) + L-glutamine + ATP + H2O = L-glutaminyl-tRNA(Gln) + L-glutamate + ADP + phosphate + H(+). It catalyses the reaction L-aspartyl-tRNA(Asn) + L-glutamine + ATP + H2O = L-asparaginyl-tRNA(Asn) + L-glutamate + ADP + phosphate + 2 H(+). Its function is as follows. Allows the formation of correctly charged Asn-tRNA(Asn) or Gln-tRNA(Gln) through the transamidation of misacylated Asp-tRNA(Asn) or Glu-tRNA(Gln) in organisms which lack either or both of asparaginyl-tRNA or glutaminyl-tRNA synthetases. The reaction takes place in the presence of glutamine and ATP through an activated phospho-Asp-tRNA(Asn) or phospho-Glu-tRNA(Gln). In Prochlorococcus marinus (strain NATL1A), this protein is Aspartyl/glutamyl-tRNA(Asn/Gln) amidotransferase subunit B.